A 237-amino-acid polypeptide reads, in one-letter code: UDP-2,3-diacylglucosamine hydrolase (237 aa).

Residues aspartate 8, histidine 10, aspartate 41, asparagine 78, and histidine 113 each coordinate Mn(2+). Substrate is bound at residue 78 to 79 (NR). Substrate-binding residues include aspartate 121, serine 159, glutamine 164, and histidine 195. 2 residues coordinate Mn(2+): histidine 195 and histidine 197.

It belongs to the LpxH family. It depends on Mn(2+) as a cofactor.

The protein resides in the cell inner membrane. It catalyses the reaction UDP-2-N,3-O-bis[(3R)-3-hydroxytetradecanoyl]-alpha-D-glucosamine + H2O = 2-N,3-O-bis[(3R)-3-hydroxytetradecanoyl]-alpha-D-glucosaminyl 1-phosphate + UMP + 2 H(+). It participates in glycolipid biosynthesis; lipid IV(A) biosynthesis; lipid IV(A) from (3R)-3-hydroxytetradecanoyl-[acyl-carrier-protein] and UDP-N-acetyl-alpha-D-glucosamine: step 4/6. In terms of biological role, hydrolyzes the pyrophosphate bond of UDP-2,3-diacylglucosamine to yield 2,3-diacylglucosamine 1-phosphate (lipid X) and UMP by catalyzing the attack of water at the alpha-P atom. Involved in the biosynthesis of lipid A, a phosphorylated glycolipid that anchors the lipopolysaccharide to the outer membrane of the cell. In Chromobacterium violaceum (strain ATCC 12472 / DSM 30191 / JCM 1249 / CCUG 213 / NBRC 12614 / NCIMB 9131 / NCTC 9757 / MK), this protein is UDP-2,3-diacylglucosamine hydrolase.